The sequence spans 155 residues: Small ribosomal subunit protein uS9 (155 aa).

The protein belongs to the universal ribosomal protein uS9 family.

In Rhizobium leguminosarum bv. trifolii (strain WSM2304), this protein is Small ribosomal subunit protein uS9.